Reading from the N-terminus, the 206-residue chain is uncharacterized protein (206 aa).

Residues 147–206 are disordered; it reads REEKAQKSKSKSRNQDERGSPLDERLGPKVSDLTLMERIFQVRRKPRKSRRDRRSRVSKR. Residues 159–173 show a composition bias toward basic and acidic residues; it reads RNQDERGSPLDERLG. The span at 187-206 shows a compositional bias: basic residues; it reads QVRRKPRKSRRDRRSRVSKR.

This is an uncharacterized protein from Schizosaccharomyces pombe (strain 972 / ATCC 24843) (Fission yeast).